Consider the following 534-residue polypeptide: uncharacterized protein (534 aa).

Disordered regions lie at residues 1-150 (MSDS…DIPP), 252-284 (RRFRRREDNERNNSNSPRNFSTHGNGNGENGQP), and 383-434 (WKSQ…PSLP). The segment covering 8–67 (SQREDNYSRDRRSRFTEDSYSRRDSQRSGNEAPRESRYYRKEEHLQERSRSRSPARDSRW) has biased composition (basic and acidic residues). Polar residues predominate over residues 102-113 (SLQSTKATSSRT). Over residues 130–141 (PSAPAPPLPPSS) the composition is skewed to pro residues. Positions 252 to 262 (RRFRRREDNER) are enriched in basic and acidic residues. Positions 263 to 272 (NNSNSPRNFS) are enriched in low complexity. A compositionally biased stretch (polar residues) spans 393-408 (NQGNRAYNPPNRNQAF).

This is an uncharacterized protein from Schizosaccharomyces pombe (strain 972 / ATCC 24843) (Fission yeast).